The chain runs to 224 residues: Urease accessory protein UreF (224 aa).

It belongs to the UreF family. As to quaternary structure, ureD, UreF and UreG form a complex that acts as a GTP-hydrolysis-dependent molecular chaperone, activating the urease apoprotein by helping to assemble the nickel containing metallocenter of UreC. The UreE protein probably delivers the nickel.

Its subcellular location is the cytoplasm. Functionally, required for maturation of urease via the functional incorporation of the urease nickel metallocenter. The chain is Urease accessory protein UreF from Azotobacter vinelandii (strain DJ / ATCC BAA-1303).